The sequence spans 156 residues: Endogenous retrovirus group K member 10 Pro protein (156 aa).

The Peptidase A2 domain maps to 21 to 96; it reads FEGLVDTGAD…IPLNLWGRDL (76 aa). Residue D26 is part of the active site. The 46-residue stretch at 111-156 folds into the G-patch domain; sequence YSPTSQKIMTKMGYIPGKGLGKNEDGIKVPVEAKINQEREGIGYPF.

Belongs to the peptidase A2 family. HERV class-II K(HML-2) subfamily. Active as a homodimer. Autoproteolytically processed at the N-terminus. Expected C-terminal autoprocessing not detected. The sequence shown is that of the processed Pro protein.

The enzyme catalyses Processing at the authentic HIV-1 PR recognition site and release of the mature p17 matrix and the p24 capsid protein, as a result of the cleavage of the -SQNY-|-PIVQ- cleavage site.. With respect to regulation, resistant to a number of clinically useful HIV-1 PR inhibitors. Inhibited by cyclic urea SD146. In terms of biological role, retroviral proteases have roles in processing of the primary translation products and the maturation of the viral particle. Endogenous Pro proteins may have kept, lost or modified their original function during evolution. This endogenous protein has retained most of the characteristics of retroviral proteases. The protein is Endogenous retrovirus group K member 10 Pro protein (ERVK-10) of Homo sapiens (Human).